The primary structure comprises 255 residues: Ditrans,polycis-undecaprenyl-diphosphate synthase ((2E,6E)-farnesyl-diphosphate specific) (255 aa).

The active site involves aspartate 21. Aspartate 21 contacts Mg(2+). Residues 22-25 (GNGR), tryptophan 26, arginine 34, histidine 38, and 66-68 (SSE) each bind substrate. The Proton acceptor role is filled by asparagine 69. Substrate contacts are provided by residues tryptophan 70, arginine 72, arginine 189, and 195-197 (RIS). Glutamate 208 serves as a coordination point for Mg(2+).

The protein belongs to the UPP synthase family. Homodimer. Mg(2+) is required as a cofactor.

The catalysed reaction is 8 isopentenyl diphosphate + (2E,6E)-farnesyl diphosphate = di-trans,octa-cis-undecaprenyl diphosphate + 8 diphosphate. In terms of biological role, catalyzes the sequential condensation of isopentenyl diphosphate (IPP) with (2E,6E)-farnesyl diphosphate (E,E-FPP) to yield (2Z,6Z,10Z,14Z,18Z,22Z,26Z,30Z,34E,38E)-undecaprenyl diphosphate (di-trans,octa-cis-UPP). UPP is the precursor of glycosyl carrier lipid in the biosynthesis of bacterial cell wall polysaccharide components such as peptidoglycan and lipopolysaccharide. This is Ditrans,polycis-undecaprenyl-diphosphate synthase ((2E,6E)-farnesyl-diphosphate specific) from Xylella fastidiosa (strain Temecula1 / ATCC 700964).